We begin with the raw amino-acid sequence, 86 residues long: Small ribosomal subunit protein bS18 (86 aa).

Belongs to the bacterial ribosomal protein bS18 family. In terms of assembly, part of the 30S ribosomal subunit. Forms a tight heterodimer with protein bS6.

Its function is as follows. Binds as a heterodimer with protein bS6 to the central domain of the 16S rRNA, where it helps stabilize the platform of the 30S subunit. The sequence is that of Small ribosomal subunit protein bS18 from Campylobacter fetus subsp. fetus (strain 82-40).